A 496-amino-acid chain; its full sequence is Protein RepS (496 aa).

A DNA-binding region spans residues 120 to 141 (SDILTTAIDLGFMPTLIIKSDK).

In terms of biological role, essential for replication. In Streptococcus pyogenes, this protein is Protein RepS (repS).